The following is a 102-amino-acid chain: Keratinocyte differentiation-associated protein (102 aa).

The N-terminal stretch at 1–22 (MKIPILPVVALLSLLALHAVQG) is a signal peptide.

As to expression, expression restricted to suprabasal keratinocytes of the epidermis.

It localises to the secreted. Its function is as follows. May act as a soluble regulator of keratinocyte differentiation. May play an important role in embryonic skin morphogenesis. This Mus musculus (Mouse) protein is Keratinocyte differentiation-associated protein.